Reading from the N-terminus, the 248-residue chain is NH(3)-dependent NAD(+) synthetase (248 aa).

30 to 37 provides a ligand contact to ATP; the sequence is GLSGGIDS. D36 contributes to the Mg(2+) binding site. A deamido-NAD(+)-binding site is contributed by R114. T134 is an ATP binding site. E139 serves as a coordination point for Mg(2+). Deamido-NAD(+) is bound by residues K147 and D154. Positions 163 and 185 each coordinate ATP. 232 to 233 contributes to the deamido-NAD(+) binding site; that stretch reads HK.

This sequence belongs to the NAD synthetase family. As to quaternary structure, homodimer.

The catalysed reaction is deamido-NAD(+) + NH4(+) + ATP = AMP + diphosphate + NAD(+) + H(+). It functions in the pathway cofactor biosynthesis; NAD(+) biosynthesis; NAD(+) from deamido-NAD(+) (ammonia route): step 1/1. Functionally, catalyzes the ATP-dependent amidation of deamido-NAD to form NAD. Uses ammonia as a nitrogen source. The chain is NH(3)-dependent NAD(+) synthetase from Mycoplasma genitalium (strain ATCC 33530 / DSM 19775 / NCTC 10195 / G37) (Mycoplasmoides genitalium).